Here is a 129-residue protein sequence, read N- to C-terminus: Large ribosomal subunit protein uL22 (129 aa).

This sequence belongs to the universal ribosomal protein uL22 family. Part of the 50S ribosomal subunit.

Functionally, this protein binds specifically to 23S rRNA; its binding is stimulated by other ribosomal proteins, e.g. L4, L17, and L20. It is important during the early stages of 50S assembly. It makes multiple contacts with different domains of the 23S rRNA in the assembled 50S subunit and ribosome. Its function is as follows. The globular domain of the protein is located near the polypeptide exit tunnel on the outside of the subunit, while an extended beta-hairpin is found that lines the wall of the exit tunnel in the center of the 70S ribosome. This Beijerinckia indica subsp. indica (strain ATCC 9039 / DSM 1715 / NCIMB 8712) protein is Large ribosomal subunit protein uL22.